The primary structure comprises 187 residues: Large ribosomal subunit protein uL10 (187 aa).

Belongs to the universal ribosomal protein uL10 family. In terms of assembly, part of the ribosomal stalk of the 50S ribosomal subunit. The N-terminus interacts with L11 and the large rRNA to form the base of the stalk. The C-terminus forms an elongated spine to which L12 dimers bind in a sequential fashion forming a multimeric L10(L12)X complex.

Its function is as follows. Forms part of the ribosomal stalk, playing a central role in the interaction of the ribosome with GTP-bound translation factors. In Synechococcus sp. (strain JA-2-3B'a(2-13)) (Cyanobacteria bacterium Yellowstone B-Prime), this protein is Large ribosomal subunit protein uL10.